Here is a 152-residue protein sequence, read N- to C-terminus: SsrA-binding protein (152 aa).

The protein belongs to the SmpB family.

Its subcellular location is the cytoplasm. In terms of biological role, required for rescue of stalled ribosomes mediated by trans-translation. Binds to transfer-messenger RNA (tmRNA), required for stable association of tmRNA with ribosomes. tmRNA and SmpB together mimic tRNA shape, replacing the anticodon stem-loop with SmpB. tmRNA is encoded by the ssrA gene; the 2 termini fold to resemble tRNA(Ala) and it encodes a 'tag peptide', a short internal open reading frame. During trans-translation Ala-aminoacylated tmRNA acts like a tRNA, entering the A-site of stalled ribosomes, displacing the stalled mRNA. The ribosome then switches to translate the ORF on the tmRNA; the nascent peptide is terminated with the 'tag peptide' encoded by the tmRNA and targeted for degradation. The ribosome is freed to recommence translation, which seems to be the essential function of trans-translation. In Rickettsia rickettsii, this protein is SsrA-binding protein.